A 299-amino-acid chain; its full sequence is Heterodisulfide reductase subunit B-like protein (299 aa).

Belongs to the HdrB family. As to quaternary structure, the heterodisulfide reductase is composed of three subunits; HdlA, HdlB and HdlC. It forms a complex with the F420-non-reducing hydrogenase (Mvh), which provides the reducing equivalents to the heterodisulfide reductase.

It localises to the cytoplasm. Functionally, has oxidoreductase activity. The Hdl and Mvh subunits may together mediate electron transfer from hydrogen to an unidentified electron acceptor on the cytoplasmic side of the membrane. In Archaeoglobus profundus (strain DSM 5631 / JCM 9629 / NBRC 100127 / Av18), this protein is Heterodisulfide reductase subunit B-like protein (hdlB).